A 210-amino-acid polypeptide reads, in one-letter code: MIGLIEGRVCHLSAPVACLMTASGVGYEVELPLPDFCQLQLEAMASLWTHLHVREDAQLLYGFLHPTERDVFRQLIRVNGVGAKMALAMMSTFSATELKHCIDTENDAALTRVPGIGKKTAQRLLIELKGKFDHIQSDMSLLTEVEQQIGIAANSEGVILAEVESALISLGYRDKEAQQAIKAARETDAGQQLVDTQSLLKLTLKQLSNF.

Positions 1-64 (MIGLIEGRVC…EDAQLLYGFL (64 aa)) are domain I. A domain II region spans residues 65 to 143 (HPTERDVFRQ…HIQSDMSLLT (79 aa)). Residues 144-154 (EVEQQIGIAAN) form a flexible linker region. Residues 155-210 (SEGVILAEVESALISLGYRDKEAQQAIKAARETDAGQQLVDTQSLLKLTLKQLSNF) form a domain III region.

This sequence belongs to the RuvA family. Homotetramer. Forms an RuvA(8)-RuvB(12)-Holliday junction (HJ) complex. HJ DNA is sandwiched between 2 RuvA tetramers; dsDNA enters through RuvA and exits via RuvB. An RuvB hexamer assembles on each DNA strand where it exits the tetramer. Each RuvB hexamer is contacted by two RuvA subunits (via domain III) on 2 adjacent RuvB subunits; this complex drives branch migration. In the full resolvosome a probable DNA-RuvA(4)-RuvB(12)-RuvC(2) complex forms which resolves the HJ.

The protein resides in the cytoplasm. Functionally, the RuvA-RuvB-RuvC complex processes Holliday junction (HJ) DNA during genetic recombination and DNA repair, while the RuvA-RuvB complex plays an important role in the rescue of blocked DNA replication forks via replication fork reversal (RFR). RuvA specifically binds to HJ cruciform DNA, conferring on it an open structure. The RuvB hexamer acts as an ATP-dependent pump, pulling dsDNA into and through the RuvAB complex. HJ branch migration allows RuvC to scan DNA until it finds its consensus sequence, where it cleaves and resolves the cruciform DNA. The protein is Holliday junction branch migration complex subunit RuvA of Psychrobacter sp. (strain PRwf-1).